The following is a 397-amino-acid chain: L-asparaginase-like protein CG4372 (397 aa).

Residues 1-22 form the signal peptide; sequence MLAQSCCLRLLILLLLFTTIGS. Disulfide bonds link Cys-90–Cys-95, Cys-189–Cys-205, and Cys-344–Cys-371.

It belongs to the Ntn-hydrolase family.

This Drosophila melanogaster (Fruit fly) protein is L-asparaginase-like protein CG4372.